A 160-amino-acid polypeptide reads, in one-letter code: Serine-protein kinase RsbW (160 aa).

It belongs to the anti-sigma-factor family.

The catalysed reaction is L-seryl-[protein] + ATP = O-phospho-L-seryl-[protein] + ADP + H(+). It carries out the reaction L-threonyl-[protein] + ATP = O-phospho-L-threonyl-[protein] + ADP + H(+). Its function is as follows. Negative regulator of sigma-B activity. Phosphorylates and inactivates its specific antagonist protein, RsbV. Upon phosphorylation of RsbV, RsbW is released and binds to sigma-B, thereby blocking its ability to form an RNA polymerase holoenzyme (E-sigma-B). This is Serine-protein kinase RsbW from Bacillus mycoides (strain KBAB4) (Bacillus weihenstephanensis).